Consider the following 135-residue polypeptide: Translation initiation factor 2 subunit beta (135 aa).

Belongs to the eIF-2-beta/eIF-5 family. In terms of assembly, heterotrimer composed of an alpha, a beta and a gamma chain.

In terms of biological role, eIF-2 functions in the early steps of protein synthesis by forming a ternary complex with GTP and initiator tRNA. The polypeptide is Translation initiation factor 2 subunit beta (Methanobrevibacter smithii (strain ATCC 35061 / DSM 861 / OCM 144 / PS)).